Consider the following 194-residue polypeptide: PRELI domain containing protein 3B (194 aa).

The PRELI/MSF1 domain occupies 1-172 (MKIWTSEHVF…VIHKLNAEIE (172 aa)). Phosphoserine is present on residues Ser-46 and Ser-51.

The protein belongs to the slowmo family.

The protein is PRELI domain containing protein 3B (PRELID3B) of Bos taurus (Bovine).